Here is a 284-residue protein sequence, read N- to C-terminus: D-tagatose-1,6-bisphosphate aldolase subunit GatY (284 aa).

Catalysis depends on Asp82, which acts as the Proton donor. Residues His83 and His180 each coordinate Zn(2+). Gly181 is a binding site for dihydroxyacetone phosphate. Residue His208 participates in Zn(2+) binding. Dihydroxyacetone phosphate is bound by residues Gly209–Ser211 and Asn230–Thr233.

The protein belongs to the class II fructose-bisphosphate aldolase family. TagBP aldolase GatY subfamily. As to quaternary structure, forms a complex with GatZ. It depends on Zn(2+) as a cofactor.

The enzyme catalyses D-tagatofuranose 1,6-bisphosphate = D-glyceraldehyde 3-phosphate + dihydroxyacetone phosphate. The protein operates within carbohydrate metabolism; D-tagatose 6-phosphate degradation; D-glyceraldehyde 3-phosphate and glycerone phosphate from D-tagatose 6-phosphate: step 2/2. Its function is as follows. Catalytic subunit of the tagatose-1,6-bisphosphate aldolase GatYZ, which catalyzes the reversible aldol condensation of dihydroxyacetone phosphate (DHAP or glycerone-phosphate) with glyceraldehyde 3-phosphate (G3P) to produce tagatose 1,6-bisphosphate (TBP). Requires GatZ subunit for full activity and stability. Is involved in the catabolism of galactitol. This Escherichia coli O7:K1 (strain IAI39 / ExPEC) protein is D-tagatose-1,6-bisphosphate aldolase subunit GatY.